Reading from the N-terminus, the 1016-residue chain is Nonsense-mediated mRNA decay factor SMG5 (1016 aa).

At Ser-2 the chain carries N-acetylserine. Ser-2 and Ser-423 each carry phosphoserine. 2 disordered regions span residues 408 to 561 (NPVP…PSEA) and 594 to 637 (PTTN…RSCR). Over residues 449-466 (KSRKFSRLSCLRRRRHPP) the composition is skewed to basic residues. Polar residues predominate over residues 594 to 603 (PTTNPHTSAS). A compositionally biased stretch (acidic residues) spans 619–628 (ASEEGSESEG). Positions 798-841 (QSEQESLLQQAQAQFRMAQEEARRNRLMRDMAQLRLQLEVSQLE) form a coiled coil. In terms of domain architecture, PINc spans 872–995 (RQLATSGRFI…GPMQAALQAA (124 aa)).

Interacts with TERT, PPP2CA and SMG1. Part of a complex that contains SMG1, SMG5, SMG7, PPP2CA, a short isoform of UPF3A (isoform UPF3AS, but not isoform UPF3AL) and phosphorylated UPF1. Not detected in complexes that contain unphosphorylated UPF1. In terms of tissue distribution, ubiquitous.

It is found in the cytoplasm. It localises to the nucleus. In terms of biological role, plays a role in nonsense-mediated mRNA decay. Does not have RNase activity by itself. Promotes dephosphorylation of UPF1. Together with SMG7 is thought to provide a link to the mRNA degradation machinery involving exonucleolytic pathways, and to serve as an adapter for UPF1 to protein phosphatase 2A (PP2A), thereby triggering UPF1 dephosphorylation. Necessary for TERT activity. This Homo sapiens (Human) protein is Nonsense-mediated mRNA decay factor SMG5.